Reading from the N-terminus, the 286-residue chain is Pantothenate synthetase (286 aa).

Residue M30–H37 coordinates ATP. H37 (proton donor) is an active-site residue. Q61 contributes to the (R)-pantoate binding site. Q61 lines the beta-alanine pocket. G148 to D151 is an ATP binding site. Position 154 (Q154) interacts with (R)-pantoate. ATP-binding positions include V177 and L185–R188.

It belongs to the pantothenate synthetase family. Homodimer.

The protein localises to the cytoplasm. The enzyme catalyses (R)-pantoate + beta-alanine + ATP = (R)-pantothenate + AMP + diphosphate + H(+). It participates in cofactor biosynthesis; (R)-pantothenate biosynthesis; (R)-pantothenate from (R)-pantoate and beta-alanine: step 1/1. Its function is as follows. Catalyzes the condensation of pantoate with beta-alanine in an ATP-dependent reaction via a pantoyl-adenylate intermediate. This chain is Pantothenate synthetase, found in Psychrobacter sp. (strain PRwf-1).